The primary structure comprises 259 residues: Chaplin-C (259 aa).

An N-terminal signal peptide occupies residues 1–28 (MRQATRKGLMTMAAATGVIAAAGGAAHA). One can recognise a Chaplin 1 domain in the interval 39-79 (SPGVLSGNTVQAPVHVPVNVCGNTVDVVGVLNPAMGNACAN). Gly residues predominate over residues 84–112 (ASGGHGGHGGHGGYGDSGGEGGSHGGSHA). 2 disordered regions span residues 84 to 129 (ASGG…NHVE) and 154 to 227 (GNDC…ALAE). In terms of domain architecture, Chaplin 2 spans 119 to 159 (SPGVGSGNHVEVPIDVPVNVCGNSIDVVGALNPTTGNDCGN). Residues 180 to 189 (HNPGNPGNPD) show a composition bias toward low complexity. An LPXTG sorting signal motif is present at residues 225–229 (LAETG). Pentaglycyl murein peptidoglycan amidated threonine is present on Thr-228. A propeptide spans 229 to 259 (GSDLPLGLALPVGAGALLAGTVLYRKARASV) (removed by sortase).

It belongs to the chaplin family. Long chaplin subfamily.

It is found in the secreted. The protein localises to the cell wall. In terms of biological role, one of 8 partially redundant surface-active proteins required for efficient formation of aerial mycelium; the short chaplins assemble into a hydrophobic, amyloidal fibrillar surface layer that envelopes and protects aerial hyphae and spores, presumably anchored to the long chaplins. Chaplins have an overlapping function with the surface-active SapB peptide; chaplins are essential on minimal medium while on rich medium both chaplins and SapB are required for efficient aerial hyphae formation. A minimal chaplin strain capable of forming aerial mycelium/hyphae on minimal medium contains ChpC, ChpE and ChpH. The strain also has restored rodlet formation on the hyphae surface. The long chaplins (ChpA, ChpB, ChpC) are not absolutely necessary for short chaplin localization or rodlet formation, but probably play a role in initiating aerial hyphae development. Chaplins are also involved in cell attachment to a hydrophobic surface. The polypeptide is Chaplin-C (Streptomyces coelicolor (strain ATCC BAA-471 / A3(2) / M145)).